Here is a 79-residue protein sequence, read N- to C-terminus: Cytochrome b-c1 complex subunit 10 (79 aa).

Over 1-23 the chain is Mitochondrial matrix; that stretch reads MISFFPNKPMYHVQPHISFITPE. The chain crosses the membrane as a helical span at residues 24 to 47; sequence RTMKTIPAFSRWAFAAVAGVFVFA. The Mitochondrial intermembrane portion of the chain corresponds to 48-79; that stretch reads MQVPKVKTTILQPIAFIGDHFKDKTPEEDKWL.

This sequence belongs to the UQCR11/QCR10 family. As to quaternary structure, component of the ubiquinol-cytochrome c oxidoreductase (cytochrome b-c1 complex, complex III, CIII), a multisubunit enzyme composed of 3 respiratory subunits cytochrome b, cytochrome c1 and Rieske protein, 2 core protein subunits, and additional low-molecular weight protein subunits. The complex exists as an obligatory dimer and forms supercomplexes (SCs) in the inner mitochondrial membrane with cytochrome c oxidase (complex IV, CIV).

The protein resides in the mitochondrion inner membrane. Its function is as follows. Component of the ubiquinol-cytochrome c oxidoreductase, a multisubunit transmembrane complex that is part of the mitochondrial electron transport chain which drives oxidative phosphorylation. The respiratory chain contains 3 multisubunit complexes succinate dehydrogenase (complex II, CII), ubiquinol-cytochrome c oxidoreductase (cytochrome b-c1 complex, complex III, CIII) and cytochrome c oxidase (complex IV, CIV), that cooperate to transfer electrons derived from NADH and succinate to molecular oxygen, creating an electrochemical gradient over the inner membrane that drives transmembrane transport and the ATP synthase. The cytochrome b-c1 complex catalyzes electron transfer from ubiquinol to cytochrome c, linking this redox reaction to translocation of protons across the mitochondrial inner membrane, with protons being carried across the membrane as hydrogens on the quinol. In the process called Q cycle, 2 protons are consumed from the matrix, 4 protons are released into the intermembrane space and 2 electrons are passed to cytochrome c. QCR10 has a role in CIII assembly and RIP1 stability. The protein is Cytochrome b-c1 complex subunit 10 of Schizosaccharomyces pombe (strain 972 / ATCC 24843) (Fission yeast).